We begin with the raw amino-acid sequence, 626 residues long: Chaperone protein HtpG (626 aa).

The a; substrate-binding stretch occupies residues 1–339 (MSTNQETRGF…SNDLPLNVSR (339 aa)). Residues 340-555 (EILQDNKVTA…NDQMTTQMAK (216 aa)) are b. Residues 556–626 (LFAAAGQPVP…FIKRVNSLLS (71 aa)) form a c region.

The protein belongs to the heat shock protein 90 family. As to quaternary structure, homodimer.

The protein localises to the cytoplasm. Its function is as follows. Molecular chaperone. Has ATPase activity. The chain is Chaperone protein HtpG from Histophilus somni (strain 129Pt) (Haemophilus somnus).